The primary structure comprises 913 residues: Protein translocase subunit SecA (913 aa).

ATP is bound by residues Q87, 105 to 109, and D512; that span reads GEGKT. 4 residues coordinate Zn(2+): C897, C899, C908, and H909.

Belongs to the SecA family. Monomer and homodimer. Part of the essential Sec protein translocation apparatus which comprises SecA, SecYEG and auxiliary proteins SecDF-YajC and YidC. Zn(2+) serves as cofactor.

Its subcellular location is the cell inner membrane. The protein localises to the cytoplasm. It catalyses the reaction ATP + H2O + cellular proteinSide 1 = ADP + phosphate + cellular proteinSide 2.. Functionally, part of the Sec protein translocase complex. Interacts with the SecYEG preprotein conducting channel. Has a central role in coupling the hydrolysis of ATP to the transfer of proteins into and across the cell membrane, serving both as a receptor for the preprotein-SecB complex and as an ATP-driven molecular motor driving the stepwise translocation of polypeptide chains across the membrane. This is Protein translocase subunit SecA from Pseudomonas savastanoi pv. phaseolicola (strain 1448A / Race 6) (Pseudomonas syringae pv. phaseolicola (strain 1448A / Race 6)).